A 368-amino-acid polypeptide reads, in one-letter code: MPDIVNRKVEHVEIAAFENVDGLSSSTFLNDVILVHQGFPGISFSEINTKTKFFRKEISVPIMVTGMTGGRNELGRINKIIAEVTEKFGIPMGVGSQRVAIEKAEARESFAIVRKVAPTIPIIANLGMPQLVKGYGLKEFQDAIQMIEADAIAVHLNPAQEVFQPEGEPEYQIYALEKLRDISKELSVPIIVKESGNGISMETAKLLYSYGIKNFDTSGQGGTNWIAIEMIRDIRRGNWKAESAKNFLNWGVPTAASIMEVRYSVPDSFLVGSGGIRSGLDAAKAIALGADIAGMALPVLKSAIEGKESLEQFFRKIIFELKAAMMLTGSKDVNALKKTSIVILGKLKEWAEYRGINLSTYDKVRKRE.

7–8 (RK) serves as a coordination point for substrate. FMN is bound by residues Thr65, 66–68 (GMT), Ser96, and Asn125. 96-98 (SQR) lines the substrate pocket. Gln160 contributes to the substrate binding site. Glu161 contacts Mg(2+). FMN contacts are provided by residues Lys193, Ser218, Thr223, 275 to 277 (GIR), and 296 to 297 (AL).

The protein belongs to the IPP isomerase type 2 family. Homooctamer. Dimer of tetramers. It depends on FMN as a cofactor. NADPH is required as a cofactor. The cofactor is Mg(2+).

The protein resides in the cytoplasm. It carries out the reaction isopentenyl diphosphate = dimethylallyl diphosphate. In terms of biological role, involved in the biosynthesis of isoprenoids. Catalyzes the 1,3-allylic rearrangement of the homoallylic substrate isopentenyl (IPP) to its allylic isomer, dimethylallyl diphosphate (DMAPP). The sequence is that of Isopentenyl-diphosphate delta-isomerase from Saccharolobus islandicus (strain M.16.27) (Sulfolobus islandicus).